The sequence spans 270 residues: Putative phosphoenolpyruvate synthase regulatory protein (270 aa).

Residue 150-157 participates in ADP binding; sequence GVSRCGKT.

It belongs to the pyruvate, phosphate/water dikinase regulatory protein family. PSRP subfamily.

It catalyses the reaction [pyruvate, water dikinase] + ADP = [pyruvate, water dikinase]-phosphate + AMP + H(+). It carries out the reaction [pyruvate, water dikinase]-phosphate + phosphate + H(+) = [pyruvate, water dikinase] + diphosphate. Its function is as follows. Bifunctional serine/threonine kinase and phosphorylase involved in the regulation of the phosphoenolpyruvate synthase (PEPS) by catalyzing its phosphorylation/dephosphorylation. The polypeptide is Putative phosphoenolpyruvate synthase regulatory protein (Shewanella pealeana (strain ATCC 700345 / ANG-SQ1)).